We begin with the raw amino-acid sequence, 221 residues long: MTIVHVITIDGPTASGKGTVAHKVADAVGYHLLDSGALYRLVALASDRIGVDIEDVDGLAKTASRLDVKFGPDRVWLSGEEVSLAIRAEAIGNRASAIAVHQPVRDALTKLQRDFRKLPGLVADGRDMGTVIFPDAQLKVFLTASVEARARRRYKQLIDKGISANIEDLLRDLEARDARDRNRAAAPLRPAEDAKLLDTSDMTVDQAVAQVLEWFAAVRKA.

Position 11–19 (11–19 (GPTASGKGT)) interacts with ATP.

This sequence belongs to the cytidylate kinase family. Type 1 subfamily.

The protein resides in the cytoplasm. It carries out the reaction CMP + ATP = CDP + ADP. The enzyme catalyses dCMP + ATP = dCDP + ADP. This is Cytidylate kinase from Cupriavidus pinatubonensis (strain JMP 134 / LMG 1197) (Cupriavidus necator (strain JMP 134)).